The sequence spans 363 residues: Flagellar P-ring protein (363 aa).

Positions 1-20 (MKIKVLLAVALLAMTVPVKA) are cleaved as a signal peptide.

It belongs to the FlgI family. In terms of assembly, the basal body constitutes a major portion of the flagellar organelle and consists of four rings (L,P,S, and M) mounted on a central rod.

It is found in the periplasm. Its subcellular location is the bacterial flagellum basal body. In terms of biological role, assembles around the rod to form the L-ring and probably protects the motor/basal body from shearing forces during rotation. In Shewanella amazonensis (strain ATCC BAA-1098 / SB2B), this protein is Flagellar P-ring protein.